The chain runs to 251 residues: 4-hydroxy-tetrahydrodipicolinate reductase (251 aa).

Residues Gly8–Met13, Gly76–Thr78, and Ala106–Phe109 each bind NAD(+). His136 acts as the Proton donor/acceptor in catalysis. Residue His137 coordinates (S)-2,3,4,5-tetrahydrodipicolinate. The active-site Proton donor is Lys140. A (S)-2,3,4,5-tetrahydrodipicolinate-binding site is contributed by Gly146 to Thr147.

The protein belongs to the DapB family.

It localises to the cytoplasm. It carries out the reaction (S)-2,3,4,5-tetrahydrodipicolinate + NAD(+) + H2O = (2S,4S)-4-hydroxy-2,3,4,5-tetrahydrodipicolinate + NADH + H(+). The catalysed reaction is (S)-2,3,4,5-tetrahydrodipicolinate + NADP(+) + H2O = (2S,4S)-4-hydroxy-2,3,4,5-tetrahydrodipicolinate + NADPH + H(+). It participates in amino-acid biosynthesis; L-lysine biosynthesis via DAP pathway; (S)-tetrahydrodipicolinate from L-aspartate: step 4/4. Its function is as follows. Catalyzes the conversion of 4-hydroxy-tetrahydrodipicolinate (HTPA) to tetrahydrodipicolinate. This is 4-hydroxy-tetrahydrodipicolinate reductase from Bifidobacterium longum (strain NCC 2705).